The primary structure comprises 683 residues: Dixin (683 aa).

Residue leucine 2 is the site of N-myristoyl glycine attachment. In terms of domain architecture, Calponin-homology (CH) spans 20 to 127 (EQQLQAYVAW…LVLALAAHFK (108 aa)). The segment at 127–300 (KPGSSRTVNQ…LEKEMEEAKK (174 aa)) is actin-binding. Serine 186 is modified (phosphoserine). Positions 207–235 (GQQRSPSESSCSSLTSPSPIHSAKSESII) are disordered. The span at 211–228 (SPSESSCSSLTSPSPIHS) shows a compositional bias: low complexity. Residue serine 231 is modified to Phosphoserine. A coiled-coil region spans residues 279–452 (SWEEQLLEQQ…EALRKLSDVS (174 aa)). Residues 482–492 (NYNSHNSQSNG) show a composition bias toward polar residues. Disordered stretches follow at residues 482–509 (NYNS…SNRG) and 556–594 (TQKK…QSSP). Residue serine 590 is modified to Phosphoserine. Residues 600–680 (CTKVLYFTDR…KIVAWVEEDH (81 aa)) form the DIX domain.

Belongs to the DIXDC1 family. Isoform 1 but not isoform 2 binds filamentous actin. Interacts with the complex composed of DVL2 and Rac. Interacts with AXIN1; competes with MAP3K1. Interacts with MAP3K4 preventing MAP3K4 interaction with AXIN1. Directly interacts (via DIX domain) with DVL2 (via DIX domain). Interacts with gamma-tubulin. Phosphorylated on tyrosine and serine residues. Post-translationally, polyubiquitinated, leading to its proteasomal degradation. WNT3A signaling increases DIXDC1 protein levels by inhibiting its ubiquitination and subsequent degradation. In terms of tissue distribution, ubiquitously expressed with higher expression in cardiac and skeletal muscles.

Its subcellular location is the cell junction. The protein resides in the focal adhesion. It is found in the cytoplasm. The protein localises to the cytoskeleton. It localises to the stress fiber. Functionally, positive effector of the Wnt signaling pathway; activates WNT3A signaling via DVL2. Regulates JNK activation by AXIN1 and DVL2. This Homo sapiens (Human) protein is Dixin (DIXDC1).